A 283-amino-acid polypeptide reads, in one-letter code: Orotidine 5'-phosphate decarboxylase (283 aa).

The Proton donor role is filled by lysine 97.

The protein belongs to the OMP decarboxylase family. Type 2 subfamily.

It catalyses the reaction orotidine 5'-phosphate + H(+) = UMP + CO2. Its pathway is pyrimidine metabolism; UMP biosynthesis via de novo pathway; UMP from orotate: step 2/2. The protein is Orotidine 5'-phosphate decarboxylase of Clostridium botulinum (strain Loch Maree / Type A3).